The primary structure comprises 209 residues: Small ribosomal subunit protein uS3 (209 aa).

Residues 38–107 form the KH type-2 domain; it reads IRKFIKNRYY…RVVINIEEIK (70 aa).

It belongs to the universal ribosomal protein uS3 family. In terms of assembly, part of the 30S ribosomal subunit. Forms a tight complex with proteins S10 and S14.

Binds the lower part of the 30S subunit head. Binds mRNA in the 70S ribosome, positioning it for translation. The sequence is that of Small ribosomal subunit protein uS3 from Thermotoga petrophila (strain ATCC BAA-488 / DSM 13995 / JCM 10881 / RKU-1).